The sequence spans 203 residues: Proteasome subunit beta 2 (203 aa).

Positions 1–9 (MGEEVSIGA) are cleaved as a propeptide — removed in mature form; by autocatalysis. The active-site Nucleophile is the Thr-10.

It belongs to the peptidase T1B family. As to quaternary structure, the 20S proteasome core is composed of 14 alpha and 14 beta subunits that assemble into four stacked heptameric rings, resulting in a barrel-shaped structure. The two inner rings, each composed of seven catalytic beta subunits, are sandwiched by two outer rings, each composed of seven alpha subunits. The catalytic chamber with the active sites is on the inside of the barrel. Has a gated structure, the ends of the cylinder being occluded by the N-termini of the alpha-subunits. Is capped at one or both ends by the proteasome regulatory ATPase, PAN.

The protein localises to the cytoplasm. It carries out the reaction Cleavage of peptide bonds with very broad specificity.. With respect to regulation, the formation of the proteasomal ATPase PAN-20S proteasome complex, via the docking of the C-termini of PAN into the intersubunit pockets in the alpha-rings, triggers opening of the gate for substrate entry. Interconversion between the open-gate and close-gate conformations leads to a dynamic regulation of the 20S proteasome proteolysis activity. Its function is as follows. Component of the proteasome core, a large protease complex with broad specificity involved in protein degradation. The sequence is that of Proteasome subunit beta 2 from Pyrobaculum calidifontis (strain DSM 21063 / JCM 11548 / VA1).